We begin with the raw amino-acid sequence, 395 residues long: Long-chain-alcohol dehydrogenase 1 (395 aa).

Residues 98–102 and 141–144 contribute to the NAD(+) site; these read GSALD and TTSG.

This sequence belongs to the iron-containing alcohol dehydrogenase family. As to quaternary structure, homooctamer.

The enzyme catalyses glycerol + NAD(+) = dihydroxyacetone + NADH + H(+). It catalyses the reaction a long-chain primary fatty alcohol + 2 NAD(+) + H2O = a long-chain fatty acid + 2 NADH + 3 H(+). Functionally, long-chain alkyl alcohol dehydrogenase that can oxidize a broad range of alkyl alcohols from ethanol to 1-triacontanol (C2 to C30) as well as 1,3-propanediol and acetaldehyde. The best substrate is ethanol. Also oxidizes glycerol. In Geobacillus thermodenitrificans (strain NG80-2), this protein is Long-chain-alcohol dehydrogenase 1 (adh1).